The following is a 536-amino-acid chain: Membrane protein insertase YidC (536 aa).

The helical transmembrane segment at 5 to 25 (ALIAVILSIVFFYGYSALFPP) threads the bilayer. Positions 30–54 (APAPSAQQAVTGSQPGAPQASVAAV) are disordered. Residues 31 to 54 (PAPSAQQAVTGSQPGAPQASVAAV) are compositionally biased toward low complexity. A run of 4 helical transmembrane segments spans residues 350 to 370 (YGIAIIIITVILKIIFYPLTH), 420 to 440 (LPMLVQIPVFFALYKALMFSI), 454 to 474 (LAGKDPYYVTPIIMGITMVIQ), and 494 to 514 (PVVFTFMFLNFPSGLVLYWLV).

This sequence belongs to the OXA1/ALB3/YidC family. Type 1 subfamily. Interacts with the Sec translocase complex via SecD. Specifically interacts with transmembrane segments of nascent integral membrane proteins during membrane integration.

The protein localises to the cell inner membrane. Its function is as follows. Required for the insertion and/or proper folding and/or complex formation of integral membrane proteins into the membrane. Involved in integration of membrane proteins that insert both dependently and independently of the Sec translocase complex, as well as at least some lipoproteins. Aids folding of multispanning membrane proteins. The sequence is that of Membrane protein insertase YidC from Geobacter metallireducens (strain ATCC 53774 / DSM 7210 / GS-15).